A 358-amino-acid chain; its full sequence is Chorismate synthase (358 aa).

Residues R48 and R54 each contribute to the NADP(+) site. Residues 125–127 (RSS), G282, 297–301 (KPPAS), and R323 contribute to the FMN site.

It belongs to the chorismate synthase family. In terms of assembly, homotetramer. It depends on FMNH2 as a cofactor.

It catalyses the reaction 5-O-(1-carboxyvinyl)-3-phosphoshikimate = chorismate + phosphate. Its pathway is metabolic intermediate biosynthesis; chorismate biosynthesis; chorismate from D-erythrose 4-phosphate and phosphoenolpyruvate: step 7/7. Functionally, catalyzes the anti-1,4-elimination of the C-3 phosphate and the C-6 proR hydrogen from 5-enolpyruvylshikimate-3-phosphate (EPSP) to yield chorismate, which is the branch point compound that serves as the starting substrate for the three terminal pathways of aromatic amino acid biosynthesis. This reaction introduces a second double bond into the aromatic ring system. This chain is Chorismate synthase, found in Roseiflexus castenholzii (strain DSM 13941 / HLO8).